We begin with the raw amino-acid sequence, 371 residues long: Dihydroorotate dehydrogenase (quinone) (371 aa).

FMN contacts are provided by residues 79–83 and Thr103; that span reads AGFDK. Lys83 provides a ligand contact to substrate. 128–132 contacts substrate; the sequence is NRMGF. FMN-binding residues include Asn156 and Asn189. A substrate-binding site is contributed by Asn189. Ser192 serves as the catalytic Nucleophile. Asn194 serves as a coordination point for substrate. The FMN site is built by Lys225 and Thr253. 254–255 contacts substrate; the sequence is NT. FMN contacts are provided by residues Gly279, Gly308, and 329-330; that span reads YT.

The protein belongs to the dihydroorotate dehydrogenase family. Type 2 subfamily. In terms of assembly, monomer. FMN is required as a cofactor.

It is found in the cell membrane. The catalysed reaction is (S)-dihydroorotate + a quinone = orotate + a quinol. Its pathway is pyrimidine metabolism; UMP biosynthesis via de novo pathway; orotate from (S)-dihydroorotate (quinone route): step 1/1. In terms of biological role, catalyzes the conversion of dihydroorotate to orotate with quinone as electron acceptor. The polypeptide is Dihydroorotate dehydrogenase (quinone) (Corynebacterium glutamicum (strain ATCC 13032 / DSM 20300 / JCM 1318 / BCRC 11384 / CCUG 27702 / LMG 3730 / NBRC 12168 / NCIMB 10025 / NRRL B-2784 / 534)).